We begin with the raw amino-acid sequence, 507 residues long: Tryptamine 4-monooxygenase (507 aa).

The N-terminal stretch at 1–19 is a signal peptide; the sequence is MIVLLVSLVLAGCIYYANA. Residues 403 to 425 form a disordered region; that stretch reads PNPSEFRPERYLSSDGKPDPTVR. Over residues 408 to 425 the composition is skewed to basic and acidic residues; the sequence is FRPERYLSSDGKPDPTVR. Residue Cys439 coordinates heme.

The protein belongs to the cytochrome P450 family. Requires heme as cofactor.

It catalyses the reaction tryptamine + AH2 + O2 = 4-hydroxytryptamine + A + H2O. Its pathway is secondary metabolite biosynthesis. Tryptamine 4-monooxygenase; part of the gene cluster that mediates the biosynthesis of psilocybin, a psychotropic tryptamine-derived natural product. The first step in the pathway is the decarboxylation of L-tryptophan to tryptamine by the decarboxylase psiD. PsiD does not decarboxylate phenylalanine, tyrosine, or 5-hydroxy- L -tryptophan (5-HTP). 4-hydroxy-L-tryptophan is accepted as substrate by psiD as well. The cytochrome P450 monooxygenase psiH then converts tryptamine to 4-hydroxytryptamine. The kinase psiK catalyzes the 4-O-phosphorylation step by converting 4-hydroxytryptamine into norbaeocystin. The methyltransferase psiM then catalyzes iterative methyl transfer to the amino group of norbaeocystin to yield psilocybin via a monomethylated intermediate, baeocystin. This Psilocybe cyanescens protein is Tryptamine 4-monooxygenase.